The following is a 306-amino-acid chain: Probable C-terminal domain small phosphatase (306 aa).

Residues Met1 to Gln36 show a composition bias toward polar residues. Disordered regions lie at residues Met1–Lys45 and Asn61–Ser116. A compositionally biased stretch (low complexity) spans Asn61 to Tyr111. In terms of domain architecture, FCP1 homology spans Arg132–Leu290. Asp142 serves as the catalytic 4-aspartylphosphate intermediate. Asp142, Asp144, and Asn253 together coordinate Mg(2+). The Proton donor role is filled by Asp144.

As to quaternary structure, monomer. The cofactor is Mg(2+).

It localises to the nucleus. The catalysed reaction is O-phospho-L-seryl-[protein] + H2O = L-seryl-[protein] + phosphate. It catalyses the reaction O-phospho-L-threonyl-[protein] + H2O = L-threonyl-[protein] + phosphate. Functionally, may function as a phosphatase involved in the regulation of cell growth and differentiation. The chain is Probable C-terminal domain small phosphatase (fcpA) from Dictyostelium discoideum (Social amoeba).